The sequence spans 347 residues: 8-amino-8-demethylriboflavin N,N-dimethyltransferase (347 aa).

Residues D209 and 235–237 (GDF) each bind S-adenosyl-L-methionine.

Belongs to the class I-like SAM-binding methyltransferase superfamily. Cation-independent O-methyltransferase family. Homodimer.

It catalyses the reaction 8-amino-8-demethylriboflavin + 2 S-adenosyl-L-methionine = roseoflavin + 2 S-adenosyl-L-homocysteine + 2 H(+). The protein operates within antibiotic biosynthesis. Its function is as follows. Catalyzes the S-adenosyl methionine-dependent conversion of 8-amino-8-demethyl-D-riboflavin (AF) into 8-methylamino-8-demethyl-D-riboflavin (MAF) and roseoflavin (RoF), the last two steps in the biosynthesis of the antibiotic roseoflavin. In Streptomyces davaonensis (strain DSM 101723 / JCM 4913 / KCC S-0913 / 768), this protein is 8-amino-8-demethylriboflavin N,N-dimethyltransferase.